A 296-amino-acid chain; its full sequence is NADH-cytochrome b5 reductase 1 (296 aa).

The chain crosses the membrane as a helical span at residues 11–31; sequence LSAVLVKFAPFAVAVIAILAA. Residues 47-152 form the FAD-binding FR-type domain; it reads SEFQNFVLKE…RGPKGAMVYT (106 aa). Residues 132–147 and 158–195 contribute to the FAD site; these read TTLK…GPKG and HIGM…KIDL.

This sequence belongs to the flavoprotein pyridine nucleotide cytochrome reductase family. Monomer. Component of the 2-(3-amino-3-carboxypropyl)histidine synthase complex composed of dph1, dph2, dph3 and a NADH-dependent reductase, predominantly cbr1. The cofactor is FAD.

The protein localises to the mitochondrion outer membrane. It catalyses the reaction 2 Fe(III)-[cytochrome b5] + NADH = 2 Fe(II)-[cytochrome b5] + NAD(+) + H(+). The enzyme catalyses 2 Fe(3+)-[Dph3] + NADH = 2 Fe(2+)-[Dph3] + NAD(+) + H(+). The protein operates within protein modification; peptidyl-diphthamide biosynthesis. Functionally, NADH-dependent reductase for dph3 and cytochrome b5. Required for the first step of diphthamide biosynthesis, a post-translational modification of histidine which occurs in elongation factor 2. Dph1 and dph2 transfer a 3-amino-3-carboxypropyl (ACP) group from S-adenosyl-L-methionine (SAM) to a histidine residue, the reaction is assisted by a reduction system comprising dph3 and a NADH-dependent reductase, predominantly cbr1. By reducing dph3, also involved in the formation of the tRNA wobble base modification mcm5s 2U (5-methoxycarbonylmethyl-2-thiouridine), mediated by the elongator complex. The cytochrome b5/NADH cytochrome b5 reductase electron transfer system supports the catalytic activity of several sterol biosynthetic enzymes. This chain is NADH-cytochrome b5 reductase 1 (cbr1), found in Aspergillus terreus (strain NIH 2624 / FGSC A1156).